The following is a 655-amino-acid chain: tRNA 5-methylaminomethyl-2-thiouridine biosynthesis bifunctional protein MnmC (655 aa).

The segment at 1-236 (MTDPLVPAVL…KRAMLVGRFA (236 aa)) is tRNA (mnm(5)s(2)U34)-methyltransferase. Residues 260–655 (IGTGLAGCAA…LRALRQGTAS (396 aa)) form an FAD-dependent cmnm(5)s(2)U34 oxidoreductase region.

It in the N-terminal section; belongs to the methyltransferase superfamily. tRNA (mnm(5)s(2)U34)-methyltransferase family. In the C-terminal section; belongs to the DAO family. It depends on FAD as a cofactor.

It localises to the cytoplasm. The catalysed reaction is 5-aminomethyl-2-thiouridine(34) in tRNA + S-adenosyl-L-methionine = 5-methylaminomethyl-2-thiouridine(34) in tRNA + S-adenosyl-L-homocysteine + H(+). Functionally, catalyzes the last two steps in the biosynthesis of 5-methylaminomethyl-2-thiouridine (mnm(5)s(2)U) at the wobble position (U34) in tRNA. Catalyzes the FAD-dependent demodification of cmnm(5)s(2)U34 to nm(5)s(2)U34, followed by the transfer of a methyl group from S-adenosyl-L-methionine to nm(5)s(2)U34, to form mnm(5)s(2)U34. This Paraburkholderia phymatum (strain DSM 17167 / CIP 108236 / LMG 21445 / STM815) (Burkholderia phymatum) protein is tRNA 5-methylaminomethyl-2-thiouridine biosynthesis bifunctional protein MnmC.